Here is a 523-residue protein sequence, read N- to C-terminus: Probable malate:quinone oxidoreductase (523 aa).

It belongs to the MQO family. The cofactor is FAD.

It catalyses the reaction (S)-malate + a quinone = a quinol + oxaloacetate. It functions in the pathway carbohydrate metabolism; tricarboxylic acid cycle; oxaloacetate from (S)-malate (quinone route): step 1/1. This chain is Probable malate:quinone oxidoreductase, found in Agrobacterium fabrum (strain C58 / ATCC 33970) (Agrobacterium tumefaciens (strain C58)).